Here is a 292-residue protein sequence, read N- to C-terminus: Ribosomal RNA small subunit methyltransferase A (292 aa).

Positions 28, 30, 55, 77, 103, and 123 each coordinate S-adenosyl-L-methionine.

Belongs to the class I-like SAM-binding methyltransferase superfamily. rRNA adenine N(6)-methyltransferase family. RsmA subfamily.

Its subcellular location is the cytoplasm. The enzyme catalyses adenosine(1518)/adenosine(1519) in 16S rRNA + 4 S-adenosyl-L-methionine = N(6)-dimethyladenosine(1518)/N(6)-dimethyladenosine(1519) in 16S rRNA + 4 S-adenosyl-L-homocysteine + 4 H(+). Specifically dimethylates two adjacent adenosines (A1518 and A1519) in the loop of a conserved hairpin near the 3'-end of 16S rRNA in the 30S particle. May play a critical role in biogenesis of 30S subunits. In Methylobacterium radiotolerans (strain ATCC 27329 / DSM 1819 / JCM 2831 / NBRC 15690 / NCIMB 10815 / 0-1), this protein is Ribosomal RNA small subunit methyltransferase A.